A 411-amino-acid chain; its full sequence is MFFRYTVTLVANETDHHATVVQALLRRHIGDITPGTTQEIENALETVCGQSKEWSSTSLAAIIIAVVARSTSRLLVGPSLCRNNDYINLCIEYATEMESSAAKIRALVPFLRPLIAPYYCRRLAELRKLAHAHIAPLLAGPDSAPKEKNASSQYTAVQWLAQKLRGVPEETEERQVARIMFLNVISIFTVMMASLNVLYDILARPDVKRALLEEIAEVSGGKGDLGLGDVEFERLRRLDSCIRESQRLNPTNWIILEGQAQKDLTFSTGLCVEKGSYLSICGGAILKSNGPPLSTSSNPPPIDEFHAFRYVTPDSGISTDVSTANGNSNANSNLATAISPTNLTFGYGRMSCPGRYFAVHSIKAIVVGLLLRYDVEFEKKDGEERGRPRNVQAGNVIIPDPSVMVRVRARG.

Asn12 and Asn149 each carry an N-linked (GlcNAc...) asparagine glycan. A helical membrane pass occupies residues 181 to 203; the sequence is FLNVISIFTVMMASLNVLYDILA. Asn342 carries an N-linked (GlcNAc...) asparagine glycan. Cys352 serves as a coordination point for heme.

It belongs to the cytochrome P450 family. The cofactor is heme.

The protein resides in the membrane. Its pathway is mycotoxin biosynthesis. Its function is as follows. Cytochrome P450 monooxygenase; part of the gene cluster that mediates the biosynthesis of sirodesmin PL, an epipolythiodioxopiperazine (ETP) characterized by a disulfide bridged cyclic dipeptide and that acts as a phytotoxin which is involved in the blackleg didease of canola. SirD catalyzes the O-prenylation of L-tyrosine (L-Tyr) in the presence of dimethylallyl diphosphate (DMAPP) to yield 4-O-dimethylallyl-L-Tyr, and therefore represents probably the first pathway-specific enzyme in the biosynthesis of sirodesmin PL. 4-O-dimethylallyl-L-Tyr, then undergoes condensation with L-Ser in a reaction catalyzed by the non-ribosomal peptide synthase sirP to form the diketopiperazine (DKP) backbone. Further bishydroxylation of the DKP performed by the cytochrome P450 monooxygenase sirC leads to the production of the intermediate phomamide. This step is essential to form the reactive thiol group required for toxicity of sirodesmin PL. The next steps of sirodesmin biosynthesis are not well understood yet, but some predictions could be made from intermediate compounds identification. Phomamide is converted into phomalizarine via oxidation, probably by sirT. Further oxidation, methylation (by sirM or sirN) and reduction steps convert phomalizarine to deacetyl sirodesmin. Finally, acetyltransferase sirH probably acetylates deacetyl sirodesmin to produce sirodesmin PL. This chain is Cytochrome P450 monooxygenase sirE, found in Leptosphaeria maculans (Blackleg fungus).